Here is a 607-residue protein sequence, read N- to C-terminus: Chaperone protein DnaK (607 aa).

Position 174 is a phosphothreonine; by autocatalysis (T174). The segment at 571–607 is disordered; it reads AAMYQKQAQQQQPGPGPDAGKDKDDKDKTVDADYEVK. The segment covering 589–607 has biased composition (basic and acidic residues); it reads AGKDKDDKDKTVDADYEVK.

Belongs to the heat shock protein 70 family.

In terms of biological role, acts as a chaperone. The sequence is that of Chaperone protein DnaK from Desulforudis audaxviator (strain MP104C).